A 195-amino-acid polypeptide reads, in one-letter code: MAKLDDATLAQLFTEARSHNGWNPEPLPESVLRELYALTKFGPTAANGSPARFYFVTSAEAKERLAKLSSGSNGPKIMQAPCTVIIGYDLDFPQTLPKLFPHAPGAKDWFNDPVAKEWCALRNSSLQGGYFMIGARALGLDVGPMSGFDNAAVDAEFFAGTNIKSNFIVSIGHGTDEGLFPRNPRLDFDEAAKIL.

It belongs to the nitroreductase family. HadB/RutE subfamily. The cofactor is FMN.

The chain is Putative NADH dehydrogenase/NAD(P)H nitroreductase CC_0061 from Caulobacter vibrioides (strain ATCC 19089 / CIP 103742 / CB 15) (Caulobacter crescentus).